We begin with the raw amino-acid sequence, 69 residues long: ATP synthase F(0) complex subunit e, mitochondrial (69 aa).

Lys-34 is subject to N6-acetyllysine. At Ser-66 the chain carries Phosphoserine.

It belongs to the ATPase e subunit family. In terms of assembly, component of the ATP synthase complex composed at least of ATP5F1A/subunit alpha, ATP5F1B/subunit beta, ATP5MC1/subunit c (homooctomer), MT-ATP6/subunit a, MT-ATP8/subunit 8, ATP5ME/subunit e, ATP5MF/subunit f, ATP5MG/subunit g, ATP5MK/subunit k, ATP5MJ/subunit j, ATP5F1C/subunit gamma, ATP5F1D/subunit delta, ATP5F1E/subunit epsilon, ATP5PF/subunit F6, ATP5PB/subunit b, ATP5PD/subunit d, ATP5PO/subunit OSCP. ATP synthase complex consists of a soluble F(1) head domain (subunits alpha(3) and beta(3)) - the catalytic core - and a membrane F(0) domain - the membrane proton channel (subunits c, a, 8, e, f, g, k and j). These two domains are linked by a central stalk (subunits gamma, delta, and epsilon) rotating inside the F1 region and a stationary peripheral stalk (subunits F6, b, d, and OSCP).

The protein localises to the mitochondrion. The protein resides in the mitochondrion inner membrane. Subunit e, of the mitochondrial membrane ATP synthase complex (F(1)F(0) ATP synthase or Complex V) that produces ATP from ADP in the presence of a proton gradient across the membrane which is generated by electron transport complexes of the respiratory chain. ATP synthase complex consist of a soluble F(1) head domain - the catalytic core - and a membrane F(1) domain - the membrane proton channel. These two domains are linked by a central stalk rotating inside the F(1) region and a stationary peripheral stalk. During catalysis, ATP synthesis in the catalytic domain of F(1) is coupled via a rotary mechanism of the central stalk subunits to proton translocation. In vivo, can only synthesize ATP although its ATP hydrolase activity can be activated artificially in vitro. Part of the complex F(0) domain. In Homo sapiens (Human), this protein is ATP synthase F(0) complex subunit e, mitochondrial.